Here is a 330-residue protein sequence, read N- to C-terminus: PDZ and LIM domain protein 4 (330 aa).

The PDZ domain occupies 1 to 84 (MTHAVTLRGP…HLTLSVSRPE (84 aa)). 2 disordered regions span residues 104-154 (DPEA…NEVT) and 219-239 (EAGEGGDRPGSGGSRNLKPAA). Serine 111, serine 115, serine 118, serine 119, serine 124, and serine 134 each carry phosphoserine. The segment covering 111–122 (SPATSRRSSISG) has biased composition (polar residues). In terms of domain architecture, LIM zinc-binding spans 255 to 305 (CTRCGHGIVGTIVKARDKLYHPECFMCSDCGLNLKQRGYFFLDERLYCENH).

In terms of assembly, homodimer. Interacts (via C-terminus only or via combined C-terminus and LIM domain, but not LIM domain only) with PTPN13 (via the second or fourth PDZ domains). Found in a complex with PTPN13 and TRIP6. Interacts (via PDZ domain) with ACTN1 and ACTN2 (via C-terminal SDL residues). Interacts (via PDZ domain) with TRIP6 (via the second LIM domain or via the third LIM domain plus C-terminus). Interacts (via LIM domain) with GRIA1 (via C-terminus); this interaction as well as the interaction with alpha-actinin is required for their colocalization in early endosomes. Interacts with PDLIM1. Forms (via LIM domain) a heterodimer with PDLIM3. Interacts directly with SRC (via kinase domain and to a lesser extent the SH2 domain). Phosphorylated on tyrosine residue(s). Can be dephosphorylated by PTPN13. In terms of tissue distribution, detected in several tissues, most prominent in brain and heart of adults. Expressed in embryonic fibroblasts.

It is found in the cytoplasm. The protein localises to the cytoskeleton. Its subcellular location is the cell projection. It localises to the dendritic spine. The protein resides in the early endosome membrane. It is found in the recycling endosome membrane. The protein localises to the nucleus. Its subcellular location is the perinuclear region. It localises to the lamellipodium. The protein resides in the synapse. It is found in the synaptosome. In terms of biological role, suppresses SRC activation by recognizing and binding to active SRC and facilitating PTPN13-mediated dephosphorylation of SRC 'Tyr-419' leading to its inactivation. Inactivated SRC dissociates from this protein allowing the initiation of a new SRC inactivation cycle. Involved in reorganization of the actin cytoskeleton. In nonmuscle cells, binds to ACTN1 (alpha-actinin-1), increases the affinity of ACTN1 to F-actin (filamentous actin), and promotes formation of actin stress fibers. Involved in regulation of the synaptic AMPA receptor transport in dendritic spines of hippocampal pyramidal neurons directing the receptors toward an insertion at the postsynaptic membrane. Links endosomal surface-internalized GRIA1-containing AMPA receptors to the alpha-actinin/actin cytoskeleton. Increases AMPA receptor-mediated excitatory postsynaptic currents in neurons. This is PDZ and LIM domain protein 4 (Pdlim4) from Rattus norvegicus (Rat).